The sequence spans 969 residues: Probable Rho-type GTPase-activating protein 3 (969 aa).

2 consecutive LIM zinc-binding domains span residues 17 to 81 (TVCF…CTAC) and 76 to 135 (HTCT…RHPS). Disordered regions lie at residues 170–223 (IEIM…ADSL), 348–459 (ATSP…VEEL), and 613–646 (TSSKNTTSSINPLTAVSSNSGQSSGRPGPLSPNL). Residues 193 to 202 (ETPTNMSQAE) are compositionally biased toward polar residues. Low complexity-rich tracts occupy residues 212 to 223 (DSNLASNSADSL) and 350 to 361 (SPFRPFSPSYRS). Polar residues-rich tracts occupy residues 369–392 (TRSPNVQTHKKTSSQPSDLSSFAQ) and 418–432 (LSETSQQTLVPSLGS). Residues 450–459 (SERDSDVEEL) show a composition bias toward basic and acidic residues. Residues 613–623 (TSSKNTTSSIN) show a composition bias toward low complexity. Residues 624–637 (PLTAVSSNSGQSSG) show a composition bias toward polar residues. The Phorbol-ester/DAG-type zinc finger occupies 697–744 (DHVFHVNAIFKPSRCYICSESVWGSELRCFHCSISCHSRCLKRLFAES). One can recognise a Rho-GAP domain in the interval 780–966 (RSLENQLKIE…FMLDNVDKIL (187 aa)).

In terms of assembly, interacts with dil1.

The protein localises to the cell tip. In terms of biological role, GTPase-activating protein for Rho-type proteins. This Schizosaccharomyces pombe (strain 972 / ATCC 24843) (Fission yeast) protein is Probable Rho-type GTPase-activating protein 3 (rga3).